We begin with the raw amino-acid sequence, 206 residues long: Probable GTP-binding protein EngB (206 aa).

The EngB-type G domain occupies 24–198 (QGREVAFAGR…HARLDEWLGL (175 aa)). GTP is bound by residues 32–39 (GRSNVGKS), 59–63 (GRTQL), 77–80 (DLPG), 144–147 (TKAD), and 177–179 (FSA). The Mg(2+) site is built by Ser39 and Thr61.

Belongs to the TRAFAC class TrmE-Era-EngA-EngB-Septin-like GTPase superfamily. EngB GTPase family. Mg(2+) serves as cofactor.

In terms of biological role, necessary for normal cell division and for the maintenance of normal septation. The polypeptide is Probable GTP-binding protein EngB (Alkalilimnicola ehrlichii (strain ATCC BAA-1101 / DSM 17681 / MLHE-1)).